A 212-amino-acid polypeptide reads, in one-letter code: Large ribosomal subunit protein uL4 (212 aa).

Residues 54–65 show a composition bias toward polar residues; the sequence is SQKSRSDVSGSN. Residues 54-85 are disordered; the sequence is SQKSRSDVSGSNKKPWRQKGTGRARSGSVKSP.

The protein belongs to the universal ribosomal protein uL4 family. As to quaternary structure, part of the 50S ribosomal subunit.

Functionally, one of the primary rRNA binding proteins, this protein initially binds near the 5'-end of the 23S rRNA. It is important during the early stages of 50S assembly. It makes multiple contacts with different domains of the 23S rRNA in the assembled 50S subunit and ribosome. Its function is as follows. Forms part of the polypeptide exit tunnel. This is Large ribosomal subunit protein uL4 from Blochmanniella floridana.